Reading from the N-terminus, the 1395-residue chain is G-protein coupled receptor-associated sorting protein 1 (1395 aa).

Disordered regions lie at residues 1-25 (MTGA…VVGG), 45-83 (QIMP…AKAI), and 269-288 (TNTW…FRSK). The segment covering 269–281 (TNTWSGPREDPNS) has biased composition (basic and acidic residues). The residue at position 297 (Ser-297) is a Phosphoserine. The disordered stretch occupies residues 446 to 469 (SMGTGASSKSRPRTDGERIGDSLF). Basic and acidic residues predominate over residues 457 to 469 (PRTDGERIGDSLF). Ser-631 and Ser-899 each carry phosphoserine. An OPRD1-binding region spans residues 899–1395 (SETEEETIFG…QNDPEGDQEN (497 aa)).

It belongs to the GPRASP family. As to quaternary structure, interacts with cytoplasmic tails of a variety of G-protein coupled receptors such as D2 dopamine receptor/DRD2, delta opioid receptor/OPRD1, beta-2 adrenergic receptor/ADRB2 and D4 dopamine receptor/DRD4. Interacts with PER1. Interacts with BECN2; the interaction is direct. In terms of tissue distribution, expressed in the brain, with lower expression in medulla, spinal cord and substantia nigra.

Its subcellular location is the cytoplasm. Modulates lysosomal sorting and functional down-regulation of a variety of G-protein coupled receptors. Targets receptors for degradation in lysosomes via its interaction with BECN2. This Homo sapiens (Human) protein is G-protein coupled receptor-associated sorting protein 1 (GPRASP1).